The primary structure comprises 130 residues: Small ribosomal subunit protein uS11c (130 aa).

It belongs to the universal ribosomal protein uS11 family. Part of the 30S ribosomal subunit.

It localises to the plastid. The protein localises to the chloroplast. The chain is Small ribosomal subunit protein uS11c from Phaeodactylum tricornutum (strain CCAP 1055/1).